Consider the following 48-residue polypeptide: DNA-directed RNA polymerase subunit Rpo12 (48 aa).

Residues cysteine 6, cysteine 9, cysteine 26, and cysteine 29 each contribute to the Zn(2+) site.

Belongs to the archaeal Rpo12/eukaryotic RPC10 RNA polymerase subunit family. In terms of assembly, part of the 13-subunit RNA polymerase. Requires Zn(2+) as cofactor.

It is found in the cytoplasm. The catalysed reaction is RNA(n) + a ribonucleoside 5'-triphosphate = RNA(n+1) + diphosphate. DNA-dependent RNA polymerase (RNAP) catalyzes the transcription of DNA into RNA using the four ribonucleoside triphosphates as substrates. In Sulfolobus acidocaldarius (strain ATCC 33909 / DSM 639 / JCM 8929 / NBRC 15157 / NCIMB 11770), this protein is DNA-directed RNA polymerase subunit Rpo12.